The sequence spans 293 residues: Ribonuclease P/MRP protein subunit RPP1 (293 aa).

It belongs to the eukaryotic/archaeal RNase P protein component 3 family. In terms of assembly, component of nuclear RNase P and RNase MRP complexes. RNase P consists of an RNA moiety and at least 9 protein subunits including POP1, POP3, POP4, POP5, POP6, POP7, POP8, RPP1 and RPR2. RNase MRP complex consists of an RNA moiety and at least 10 protein subunits including POP1, POP3, POP4, POP5, POP6, POP7, POP8, RMP1, RPP1 and SNM1, many of which are shared with the RNase P complex.

Its subcellular location is the nucleus. The catalysed reaction is Endonucleolytic cleavage of RNA, removing 5'-extranucleotides from tRNA precursor.. Its function is as follows. Component of ribonuclease P, a protein complex that generates mature tRNA molecules by cleaving their 5'-ends. Also a component of RNase MRP, which cleaves pre-rRNA sequences. This is Ribonuclease P/MRP protein subunit RPP1 (RPP1) from Saccharomyces cerevisiae (strain ATCC 204508 / S288c) (Baker's yeast).